Reading from the N-terminus, the 433-residue chain is Oxaloacetate decarboxylase beta chain 2 (433 aa).

A run of 10 helical transmembrane segments spans residues 16 to 36 (LGAG…LAIA), 42 to 62 (LLLL…AGMA), 122 to 142 (VLAL…VIFM), 168 to 188 (FGIF…LIAF), 190 to 210 (LPQA…AIYL), 216 to 236 (PELL…VPLI), 266 to 286 (ILFP…AAPL), 311 to 331 (NGLI…KLVA), 340 to 360 (LGIL…GVLM), and 413 to 433 (VAGV…VLAM).

This sequence belongs to the GcdB/MmdB/OadB family. In terms of assembly, heterotrimer of an alpha, a beta and a gamma subunit. Na(+) serves as cofactor.

It localises to the cell membrane. The enzyme catalyses oxaloacetate + 2 Na(+)(in) + H(+) = pyruvate + 2 Na(+)(out) + CO2. Functionally, catalyzes the decarboxylation of oxaloacetate coupled to Na(+) translocation. The protein is Oxaloacetate decarboxylase beta chain 2 (oadB2) of Salmonella typhi.